A 142-amino-acid chain; its full sequence is uncharacterized protein (142 aa).

The region spanning 2 to 142 (IHMKQLTSKE…IESYLFRKPV (141 aa)) is the N-acetyltransferase domain.

This sequence belongs to the acetyltransferase family.

This is an uncharacterized protein from Bacillus subtilis (strain 168).